The following is a 501-amino-acid chain: MTNHSVILCILDGWGNNKNSQFNAIAQADTPYWDSIISQYPQSNIVTHGPDVGLPDRQIGNSEVGHISLGSGRIVLQDLCRINEEIKNIRKNTHLLEFTEQIKRNNGICHIAGLLSDGGIHSSLSHMLDIIDALSYLKIQVVIHIFLDGRDTPPISALKYINILCSHIKDLNNVSIATISGRYYSMDRDNRLDRTTKAYNSIAFGDGKRYEEPISAVQDNYNAGITDEFIIPCVIGNYQGMNPTDGFIMTNFRSDRVIQILKMITEDQNTNHITLKNTIGMIKYSNELNIPCLFPNKKISNTLGEIISNQQLHQLRIAETEKYAHVTFFFNGGREEVFENEERIIIPSPSVTTYDLVPEMSAYEITDTLIKKINLQKYSLIIINYANADMVGHTGNIEATKKAITTLDQCLGKILKCIHNTNYILVITADHGNAEEMFDVQNNMPYTAHTLNPVPFVVCNYPKKIKLKNGRLSDVAPTILEILNIKQPEEMTGISLIDTSN.

Asp12 and Ser62 together coordinate Mn(2+). Residue Ser62 is the Phosphoserine intermediate of the active site. Residues His121, 150–151 (RD), Arg182, Arg188, 253–256 (RSDR), and Lys322 each bind substrate. Residues Asp389, His393, Asp430, His431, and His449 each coordinate Mn(2+).

The protein belongs to the BPG-independent phosphoglycerate mutase family. In terms of assembly, monomer. Mn(2+) serves as cofactor.

It carries out the reaction (2R)-2-phosphoglycerate = (2R)-3-phosphoglycerate. It functions in the pathway carbohydrate degradation; glycolysis; pyruvate from D-glyceraldehyde 3-phosphate: step 3/5. In terms of biological role, catalyzes the interconversion of 2-phosphoglycerate and 3-phosphoglycerate. The chain is 2,3-bisphosphoglycerate-independent phosphoglycerate mutase from Ehrlichia ruminantium (strain Gardel).